The chain runs to 198 residues: Charged multivesicular body protein 1a (198 aa).

Coiled-coil stretches lie at residues 7 to 41 (QLKF…QQKN) and 176 to 198 (GETS…ALRN). Residues 171-198 (GASALGETSARAQEKEDQLSRRLAALRN) are disordered. Residues 187 to 197 (DQLSRRLAALR) carry the MIT-interacting motif motif.

Belongs to the SNF7 family. Probable peripherally associated component of the endosomal sorting required for transport complex III (ESCRT-III).

It is found in the cytoplasm. It localises to the endosome membrane. Its function is as follows. Probable peripherally associated component of the endosomal sorting required for transport complex III (ESCRT-III) which is involved in multivesicular bodies (MVBs) formation and sorting of endosomal cargo proteins into MVBs. MVBs contain intraluminal vesicles (ILVs) that are generated by invagination and scission from the limiting membrane of the endosome and mostly are delivered to lysosomes enabling degradation of membrane proteins, such as stimulated growth factor receptors, lysosomal enzymes and lipids. This chain is Charged multivesicular body protein 1a (chmp1a), found in Danio rerio (Zebrafish).